A 430-amino-acid polypeptide reads, in one-letter code: Serine--tRNA ligase (430 aa).

The disordered stretch occupies residues T44–G65. T237–E239 is a binding site for L-serine. Position 268-270 (R268–E270) interacts with ATP. An L-serine-binding site is contributed by E291. Residue E355 to S358 participates in ATP binding. Residue S391 coordinates L-serine.

It belongs to the class-II aminoacyl-tRNA synthetase family. Type-1 seryl-tRNA synthetase subfamily. As to quaternary structure, homodimer. The tRNA molecule binds across the dimer.

The protein localises to the cytoplasm. The catalysed reaction is tRNA(Ser) + L-serine + ATP = L-seryl-tRNA(Ser) + AMP + diphosphate + H(+). The enzyme catalyses tRNA(Sec) + L-serine + ATP = L-seryl-tRNA(Sec) + AMP + diphosphate + H(+). Its pathway is aminoacyl-tRNA biosynthesis; selenocysteinyl-tRNA(Sec) biosynthesis; L-seryl-tRNA(Sec) from L-serine and tRNA(Sec): step 1/1. Catalyzes the attachment of serine to tRNA(Ser). Is also able to aminoacylate tRNA(Sec) with serine, to form the misacylated tRNA L-seryl-tRNA(Sec), which will be further converted into selenocysteinyl-tRNA(Sec). In Edwardsiella ictaluri (strain 93-146), this protein is Serine--tRNA ligase.